The following is a 734-amino-acid chain: Photosystem I P700 chlorophyll a apoprotein A2 (734 aa).

Helical transmembrane passes span 46–69, 135–158, 175–199, 273–291, 330–353, 369–395, 417–439, and 517–535; these read IFAS…FHVA, LYTG…LHLQ, LNHH…HVAI, MAHH…GHMY, IHFQ…QHMY, AALY…IFFI, AIIS…LYVH, and FLVH…LILV. 2 residues coordinate [4Fe-4S] cluster: Cys-559 and Cys-568. The next 2 membrane-spanning stretches (helical) occupy residues 575-596 and 643-665; these read AFYL…YWHW and LSVW…MFLI. Chlorophyll a contacts are provided by His-654, Met-662, and Tyr-670. Trp-671 contacts phylloquinone. A helical membrane pass occupies residues 707–727; that stretch reads LVGLAHFSVGYIFTYAAFLIA.

Belongs to the PsaA/PsaB family. The PsaA/B heterodimer binds the P700 chlorophyll special pair and subsequent electron acceptors. PSI consists of a core antenna complex that captures photons, and an electron transfer chain that converts photonic excitation into a charge separation. The eukaryotic PSI reaction center is composed of at least 11 subunits. The cofactor is P700 is a chlorophyll a/chlorophyll a' dimer, A0 is one or more chlorophyll a, A1 is one or both phylloquinones and FX is a shared 4Fe-4S iron-sulfur center..

The protein localises to the plastid. Its subcellular location is the chloroplast thylakoid membrane. The enzyme catalyses reduced [plastocyanin] + hnu + oxidized [2Fe-2S]-[ferredoxin] = oxidized [plastocyanin] + reduced [2Fe-2S]-[ferredoxin]. PsaA and PsaB bind P700, the primary electron donor of photosystem I (PSI), as well as the electron acceptors A0, A1 and FX. PSI is a plastocyanin-ferredoxin oxidoreductase, converting photonic excitation into a charge separation, which transfers an electron from the donor P700 chlorophyll pair to the spectroscopically characterized acceptors A0, A1, FX, FA and FB in turn. Oxidized P700 is reduced on the lumenal side of the thylakoid membrane by plastocyanin. The protein is Photosystem I P700 chlorophyll a apoprotein A2 of Hordeum vulgare (Barley).